A 391-amino-acid chain; its full sequence is Phosphoglycerate kinase (391 aa).

Substrate is bound by residues 21–23 (DLN), arginine 36, 59–62 (HLGR), arginine 113, and arginine 146. ATP is bound by residues lysine 197, glutamate 319, and 345 to 348 (GGDT).

This sequence belongs to the phosphoglycerate kinase family. As to quaternary structure, monomer.

It is found in the cytoplasm. The enzyme catalyses (2R)-3-phosphoglycerate + ATP = (2R)-3-phospho-glyceroyl phosphate + ADP. Its pathway is carbohydrate degradation; glycolysis; pyruvate from D-glyceraldehyde 3-phosphate: step 2/5. The chain is Phosphoglycerate kinase from Shewanella sp. (strain ANA-3).